A 1310-amino-acid chain; its full sequence is Contactin-associated protein-like 4 (1310 aa).

Residues 1 to 27 (MNMGSVAGAVLKMLLLLSTQNWNRVEA) form the signal peptide. At 28–1243 (GNSYDCDEPL…LTHAIKSDSA (1216 aa)) the chain is on the extracellular side. An F5/8 type C domain is found at 33-179 (CDEPLVSALP…IGMRIEVFGC (147 aa)). A disulfide bond links cysteine 33 and cysteine 179. The region spanning 214–346 (FKTMESDGIL…NLFYNGVDVI (133 aa)) is the Laminin G-like 1 domain. 3 N-linked (GlcNAc...) asparagine glycosylation sites follow: asparagine 262, asparagine 287, and asparagine 361. Disulfide bonds link cysteine 334–cysteine 366, cysteine 517–cysteine 549, cysteine 555–cysteine 566, and cysteine 560–cysteine 575. The 130-residue stretch at 400–529 (FRTWNKAGLL…LISINNKMVD (130 aa)) folds into the Laminin G-like 2 domain. Residue asparagine 540 is glycosylated (N-linked (GlcNAc...) asparagine). Residues 551–588 (ISDRCLPNSCEHGGECSQSWSTFHCNCTNTGYTGATCH) form the EGF-like 1 domain. Asparagine 576 carries N-linked (GlcNAc...) asparagine glycosylation. A disulfide bridge links cysteine 577 with cysteine 587. Positions 589 to 794 (SSVYEQSCEA…LLCRGDRPFW (206 aa)) constitute a Fibrinogen C-terminal domain. 5 N-linked (GlcNAc...) asparagine glycosylation sites follow: asparagine 604, asparagine 627, asparagine 639, asparagine 708, and asparagine 750. One can recognise a Laminin G-like 3 domain in the interval 795-960 (NAASFNTEAS…TVTPGVQPGC (166 aa)). 4 cysteine pairs are disulfide-bonded: cysteine 933/cysteine 960, cysteine 964/cysteine 977, cysteine 971/cysteine 986, and cysteine 988/cysteine 998. The region spanning 960 to 999 (CRGHCGSYGKLCRHGGKCREKPSGFFCDCSSSAYAGPFCS) is the EGF-like 2 domain. N-linked (GlcNAc...) asparagine glycosylation is found at asparagine 1019, asparagine 1025, and asparagine 1075. The 157-residue stretch at 1048-1204 (FRTTRAPSLL…VTGHVTESSC (157 aa)) folds into the Laminin G-like 4 domain. A disulfide bridge connects residues cysteine 1169 and cysteine 1204. A helical transmembrane segment spans residues 1244 to 1264 (VIGGLIAVVIFILLCVSAIAV). Residues 1265-1310 (RIYQQKRLYKRNEAKRSENVDSAEAVLKSELHIQNAVGENQKEYFF) are Cytoplasmic-facing.

The protein belongs to the neurexin family. As to quaternary structure, interacts with TIAM1. As to expression, specifically present in developing cortical interneurons: highly expressed in cortical parvalbumin (PV) cells and midbrain dopaminergic neurons and is localized presynaptically (at protein level). Also present in the substantia nigra pars compacta (SnC) and ventral tegmental area (VTA) midbrain dopaminergic projection populations.

The protein localises to the presynaptic cell membrane. Its function is as follows. Presynaptic protein involved in both dopaminergic synaptic transmission and GABAergic system, thereby participating in the structural maturation of inhibitory interneuron synapses. Involved in the dopaminergic synaptic transmission by attenuating dopamine release through a presynaptic mechanism. Also participates in the GABAergic system. This is Contactin-associated protein-like 4 (Cntnap4) from Mus musculus (Mouse).